Consider the following 408-residue polypeptide: Neutral cholesterol ester hydrolase 1 (408 aa).

At 1–4 (MRSS) the chain is on the cytoplasmic side. The helical; Signal-anchor for type II membrane protein transmembrane segment at 5 to 25 (CVLLTALLALAAYYIYIPLPS) threads the bilayer. The Lumenal portion of the chain corresponds to 26–408 (SVSDPWKLML…SYIKWLDQNL (383 aa)). Positions 113 to 115 (HGG) match the Involved in the stabilization of the negatively charged intermediate by the formation of the oxyanion hole motif. Ser191 is a catalytic residue. N-linked (GlcNAc...) asparagine glycosylation is found at Asn270 and Asn287. Active-site residues include Asp348 and His378. Asn389 carries N-linked (GlcNAc...) asparagine glycosylation.

This sequence belongs to the 'GDXG' lipolytic enzyme family. Post-translationally, N-glycosylated.

Its subcellular location is the cell membrane. It localises to the microsome. It catalyses the reaction a 1-O-alkyl-2-acetyl-sn-glycerol + H2O = a 1-O-alkyl-sn-glycerol + acetate + H(+). The catalysed reaction is 1-O-hexadecyl-2-acetyl-sn-glycerol + H2O = 1-O-hexadecyl-sn-glycerol + acetate + H(+). It carries out the reaction a cholesterol ester + H2O = cholesterol + a fatty acid + H(+). The enzyme catalyses cholesteryl (9Z-octadecenoate) + H2O = cholesterol + (9Z)-octadecenoate + H(+). Functionally, hydrolyzes 2-acetyl monoalkylglycerol ether (1-O-alkyl-2-acetyl-sn-glycerol), the penultimate precursor of the pathway for de novo synthesis of platelet-activating factor. May be responsible for the hydrolysis of cholesterol esters (such as cholesteryl (9Z-octadecenoate)) in macrophages. Also involved in organ detoxification by hydrolyzing exogenous organophosphorus compounds. This is Neutral cholesterol ester hydrolase 1 (NCEH1) from Bos taurus (Bovine).